The sequence spans 180 residues: Adenine phosphoribosyltransferase (180 aa).

A2 is modified (N-acetylalanine). S4, S15, and S30 each carry phosphoserine. Residue Y60 is modified to Phosphotyrosine. A Phosphoserine modification is found at S66. Residue K114 is modified to N6-acetyllysine. A Phosphothreonine modification is found at T135.

This sequence belongs to the purine/pyrimidine phosphoribosyltransferase family. In terms of assembly, homodimer.

It is found in the cytoplasm. It catalyses the reaction AMP + diphosphate = 5-phospho-alpha-D-ribose 1-diphosphate + adenine. It functions in the pathway purine metabolism; AMP biosynthesis via salvage pathway; AMP from adenine: step 1/1. In terms of biological role, catalyzes a salvage reaction resulting in the formation of AMP, that is energically less costly than de novo synthesis. This is Adenine phosphoribosyltransferase from Cricetulus griseus (Chinese hamster).